We begin with the raw amino-acid sequence, 490 residues long: Betaine aldehyde dehydrogenase (490 aa).

3 residues coordinate K(+): Ser26, Ile27, and Asp93. Residue 150–152 (GAW) participates in NAD(+) binding. Lys162 serves as the catalytic Charge relay system. NAD(+) contacts are provided by residues 176–179 (KPSE) and 230–233 (GVET). Leu246 is a binding site for K(+). Catalysis depends on Glu252, which acts as the Proton acceptor. NAD(+)-binding residues include Gly254, Cys286, and Glu387. Cys286 acts as the Nucleophile in catalysis. Cys286 carries the cysteine sulfenic acid (-SOH) modification. Residues Lys457 and Gly460 each contribute to the K(+) site. Catalysis depends on Glu464, which acts as the Charge relay system.

Belongs to the aldehyde dehydrogenase family. As to quaternary structure, dimer of dimers. The cofactor is K(+).

It carries out the reaction betaine aldehyde + NAD(+) + H2O = glycine betaine + NADH + 2 H(+). Its pathway is amine and polyamine biosynthesis; betaine biosynthesis via choline pathway; betaine from betaine aldehyde: step 1/1. In terms of biological role, involved in the biosynthesis of the osmoprotectant glycine betaine. Catalyzes the irreversible oxidation of betaine aldehyde to the corresponding acid. This Acinetobacter baumannii (strain ACICU) protein is Betaine aldehyde dehydrogenase.